Here is a 170-residue protein sequence, read N- to C-terminus: Mitochondrial fission 1 protein A (170 aa).

Residues 90–123 (REKLYLLAVGYYRSGNYSRSRQLVDRCIEMQADW) form a TPR repeat. A helical membrane pass occupies residues 142–162 (VIGIGITATAFGAVGLIAGGI).

It belongs to the FIS1 family. As to quaternary structure, interacts with ARC5.

It is found in the mitochondrion outer membrane. Its subcellular location is the peroxisome membrane. Component of the peroxisomal and mitochondrial division machineries. Plays a role in promoting the fission of mitochondria and peroxisomes. The protein is Mitochondrial fission 1 protein A (FIS1A) of Arabidopsis thaliana (Mouse-ear cress).